The primary structure comprises 547 residues: Probable FMN/FAD exporter YeeO (547 aa).

Helical transmembrane passes span Ile-94–Leu-114, Val-139–Leu-159, Ser-174–Glu-194, Leu-211–Ile-231, Leu-246–Phe-268, Gly-281–Phe-301, Phe-318–Phe-338, Ala-350–Ile-370, Val-404–Gly-424, Val-439–Val-459, and Val-486–Gly-506.

This sequence belongs to the multi antimicrobial extrusion (MATE) (TC 2.A.66.1) family.

The protein localises to the cell inner membrane. A transporter able to export peptides and flavins. When overexpressed allows cells deleted for multiple peptidases (pepA, pepB, pepD and pepN) to grow in the presence of dipeptides Ala-Gln or Gly-Tyr which otherwise inhibit growth. Cells overexpressing this protein have decreased intracellular levels of Ala-Gln dipeptide, and in a system that produces the Ala-Gln dipeptide, overproduction of this protein increases its export. When overexpressed increases secretion of FMN and FAD but not riboflavin; intracellular concentrations of FMN and riboflavin rise, possibly to compensate for increased secretion. Increased overexpression causes slight cell elongation. This Escherichia coli (strain K12) protein is Probable FMN/FAD exporter YeeO (yeeO).